The chain runs to 581 residues: Chaperonin GroEL 1 (581 aa).

Residues 29–32 (TIGP), 86–90 (DGTTT), glycine 413, and aspartate 492 each bind ATP.

Belongs to the chaperonin (HSP60) family. Forms a cylinder of 14 subunits composed of two heptameric rings stacked back-to-back. Interacts with the co-chaperonin GroES.

The protein resides in the cytoplasm. It carries out the reaction ATP + H2O + a folded polypeptide = ADP + phosphate + an unfolded polypeptide.. Together with its co-chaperonin GroES, plays an essential role in assisting protein folding. The GroEL-GroES system forms a nano-cage that allows encapsulation of the non-native substrate proteins and provides a physical environment optimized to promote and accelerate protein folding. This chain is Chaperonin GroEL 1, found in Prochlorococcus marinus subsp. pastoris (strain CCMP1986 / NIES-2087 / MED4).